The primary structure comprises 630 residues: MEWDSESDGAGSIGAGEEEEEEEEEEEGGFGGGGGGGGGGGGMFSFAIEGMLRASGPCGLVVTDALEPDCPIIYVNCGFEEATGYRAEEVLGRNCRFLQCRGPFAQRRHPLVDAMVVSEIRKCIDNGTEFRGDLLNFRKDGSPLMNKLHLTPIYGDDETITHYMGIQFFTNANVDLGPLPGSLTKEPVRSTRFTPDNFFRPISTGPGQSNFCREYSSLFQLTDEVLCQSILSRLSPRDIASVSSVCRRLYLLTRNEDLWRMVCQNAWGSETTRALETVPAAKRLGWGRLARELTTLEAVAWRKLTVGGAVEPSRCNFSACAVGNRVVLFGGEGVNMQPMNDTFVLDLNASNPEWRHVNVSSAPPGRWGHTLSCLNGSLLVVFGGCGRQGLLNDVFTLDLDAKQPTWREIPGVAPPVPRSWHSSCTLDGTKLVVSGGCADSGVLLSDTYLLDVTMDKPVWREVPASWTPPSRLGHSMSVYGGRKILMFGGLAKSGPLRLRSSDVFTMDLSEEEPCWRCLTGSGMPGAGNPAGAGPPPRLDHVAVSLPGGRVLIFGGSVAGLHSASQLYLLDPTEEKPTWRILNVPGRPPRFAWGHSTCVVGGTKAIVLGGQTGEEWMLTEIHELSLASSTV.

Residues 1–36 (MEWDSESDGAGSIGAGEEEEEEEEEEEGGFGGGGGG) form a disordered region. Residues 16-28 (GEEEEEEEEEEEG) are compositionally biased toward acidic residues. In terms of domain architecture, PAS spans 48–127 (IEGMLRASGP…SEIRKCIDNG (80 aa)). S-4a-FMN cysteine is present on C95. The region spanning 216-262 (SSLFQLTDEVLCQSILSRLSPRDIASVSSVCRRLYLLTRNEDLWRMV) is the F-box domain. Kelch repeat units lie at residues 378 to 428 (LLVV…TLDG), 430 to 481 (KLVV…VYGG), 483 to 535 (KILM…AGPP), and 549 to 601 (RVLI…VVGG).

Belongs to the ADAGIO family. In terms of processing, FMN binds covalently to cysteine after exposure to blue light and is reversed in the dark.

It localises to the nucleus. Its pathway is protein modification; protein ubiquitination. Its function is as follows. Component of an E3 ubiquitin ligase complex that plays a central role in blue light-dependent circadian cycles. Acts as a blue light photoreceptor, due to the presence of FMN, that mediates light-regulated protein degradation of critical clock components by targeting them to the proteasome complex. The sequence is that of Adagio-like protein 1 from Oryza sativa subsp. japonica (Rice).